We begin with the raw amino-acid sequence, 148 residues long: Snaclec B4 (148 aa).

The N-terminal stretch at 1–24 (MGRIIFVSFGLLVVFLSLSGTGAA) is a signal peptide. 3 disulfides stabilise this stretch: Cys-27–Cys-38, Cys-55–Cys-144, and Cys-121–Cys-136. One can recognise a C-type lectin domain in the interval 34–145 (YDQHCYKVFD…CRLLGHFVCK (112 aa)).

It belongs to the snaclec family. Heterodimer; disulfide-linked. Expressed by the venom gland.

The protein resides in the secreted. Functionally, interferes with one step of hemostasis (modulation of platelet aggregation, or coagulation cascade, for example). This Macrovipera lebetinus (Levantine viper) protein is Snaclec B4.